Consider the following 20-residue polypeptide: Cuticle-degrading protease-like protein (20 aa).

A disordered region spans residues 1–20 (AIVEQQGAPXGLGRIINKXK).

It belongs to the peptidase S8 family.

The protein localises to the secreted. Capable of breaching the insect cuticle. The polypeptide is Cuticle-degrading protease-like protein (Metacordyceps chlamydosporia (Nematophagous fungus)).